A 166-amino-acid chain; its full sequence is uncharacterized protein (166 aa).

This is an uncharacterized protein from Acidianus hospitalis (AFV-1).